The primary structure comprises 458 residues: Exodeoxyribonuclease 7 large subunit (458 aa).

The protein belongs to the XseA family. As to quaternary structure, heterooligomer composed of large and small subunits.

It is found in the cytoplasm. The catalysed reaction is Exonucleolytic cleavage in either 5'- to 3'- or 3'- to 5'-direction to yield nucleoside 5'-phosphates.. Bidirectionally degrades single-stranded DNA into large acid-insoluble oligonucleotides, which are then degraded further into small acid-soluble oligonucleotides. In Escherichia coli O81 (strain ED1a), this protein is Exodeoxyribonuclease 7 large subunit.